A 183-amino-acid chain; its full sequence is Protein jagunal homolog 1 (183 aa).

Over 1-39 (MASRAGPRAAGTDGSDFQHRERVAMHYQMSVTLKYEIKK) the chain is Cytoplasmic. Serine 3 is subject to Phosphoserine. Residues 40 to 60 (LIYVHLVIWLLLVAKMSVGHL) traverse the membrane as a helical segment. Over 61-71 (RLLSHDQVAMP) the chain is Lumenal. The helical transmembrane segment at 72 to 92 (YQWEYPYLLSIVPSVLGLLSF) threads the bilayer. Residues 93 to 96 (PRNN) lie on the Cytoplasmic side of the membrane. Residues 97–117 (ISYLVLSMISMGLFSIAPLIY) form a helical membrane-spanning segment. The Lumenal portion of the chain corresponds to 118 to 137 (GSMEMFPAAQQLYRHGKAYR). The helical transmembrane segment at 138-158 (FLFGFSAVSVMYLVLVLAVQV) threads the bilayer. The Cytoplasmic segment spans residues 159–183 (HAWQLYYSKKLLDSWFTSTQEKKRK).

The protein belongs to the jagunal family. In terms of assembly, interacts with COPA, COPB2 and COPG2.

The protein localises to the endoplasmic reticulum membrane. In terms of biological role, endoplasmic reticulum transmembrane protein involved in vesicle-mediated transport, which is required for neutrophil function. Required for vesicle-mediated transport; it is however unclear whether it is involved in early secretory pathway or intracellular protein transport. Acts as a regulator of neutrophil function, probably via its role in vesicle-mediated transport: required for defense against fungal pathogens and for granulocyte colony-stimulating factor (GM-CSF) signaling pathway; possibly by regulating glycosylation and/or targeting of proteins contributing to the viability and migration of neutrophils. This is Protein jagunal homolog 1 from Mus musculus (Mouse).